A 672-amino-acid chain; its full sequence is Methionine--tRNA ligase (672 aa).

A 'HIGH' region motif is present at residues 12 to 22; it reads AYTNGPLHLGH. Positions 144, 147, 156, and 159 each coordinate Zn(2+). Positions 330-334 match the 'KMSKS' region motif; it reads KMSTS. ATP is bound at residue Thr333. Residues 573 to 672 enclose the tRNA-binding domain; it reads DFAKIELKVA…KDLPVGSTIC (100 aa).

Belongs to the class-I aminoacyl-tRNA synthetase family. MetG type 1 subfamily. Homodimer. It depends on Zn(2+) as a cofactor.

The protein localises to the cytoplasm. The enzyme catalyses tRNA(Met) + L-methionine + ATP = L-methionyl-tRNA(Met) + AMP + diphosphate. Its function is as follows. Is required not only for elongation of protein synthesis but also for the initiation of all mRNA translation through initiator tRNA(fMet) aminoacylation. This is Methionine--tRNA ligase from Methanococcus aeolicus (strain ATCC BAA-1280 / DSM 17508 / OCM 812 / Nankai-3).